Here is a 424-residue protein sequence, read N- to C-terminus: Histidine--tRNA ligase (424 aa).

This sequence belongs to the class-II aminoacyl-tRNA synthetase family. In terms of assembly, homodimer.

It is found in the cytoplasm. It carries out the reaction tRNA(His) + L-histidine + ATP = L-histidyl-tRNA(His) + AMP + diphosphate + H(+). The sequence is that of Histidine--tRNA ligase from Salmonella heidelberg (strain SL476).